Consider the following 323-residue polypeptide: MTIRAVVRGVGHYLPDRIVPNSELEALVETTDEWIRTRSGIERRHFAAEGQTTSDLAARAARAALADAGLQPDDIDTLIVATSTADLTFPSAATMVQAALGMSRGFAFDVQAVCAGFVYALANADALIRSGQANRVLVIGAETFSRLMDWSDRATCVLFGDGAGALVLEGAEGAGTSADRGILATDLHSDGRFKDLLYVDGGASTGSTGHLRMQGREVFRHAVEKLAETAHTALDKAGLTSADVDWIVPHQANLRIISATAQRMQVPMDRVILTVQDHGNTSAASIPLALSVGKARGQIKEGDLLVTEAIGGGLAWGSVVLRW.

Residues Cys-114 and His-250 contribute to the active site. Positions 251–255 (QANLR) are ACP-binding. Residue Asn-280 is part of the active site.

It belongs to the thiolase-like superfamily. FabH family. Homodimer.

It is found in the cytoplasm. It catalyses the reaction malonyl-[ACP] + acetyl-CoA + H(+) = 3-oxobutanoyl-[ACP] + CO2 + CoA. Its pathway is lipid metabolism; fatty acid biosynthesis. In terms of biological role, catalyzes the condensation reaction of fatty acid synthesis by the addition to an acyl acceptor of two carbons from malonyl-ACP. Catalyzes the first condensation reaction which initiates fatty acid synthesis and may therefore play a role in governing the total rate of fatty acid production. Possesses both acetoacetyl-ACP synthase and acetyl transacylase activities. Its substrate specificity determines the biosynthesis of branched-chain and/or straight-chain of fatty acids. This chain is Beta-ketoacyl-[acyl-carrier-protein] synthase III, found in Cereibacter sphaeroides (strain ATCC 17025 / ATH 2.4.3) (Rhodobacter sphaeroides).